Reading from the N-terminus, the 623-residue chain is Quinoprotein ethanol dehydrogenase (623 aa).

A signal peptide spans 1–34; the sequence is MTTRTSPAPAGLLRPSLHCLAFAVALGSAGAALA. Ca(2+)-binding residues include aspartate 45, threonine 48, and aspartate 51. Glutamate 95 provides a ligand contact to pyrroloquinoline quinone. Cysteine 139 and cysteine 140 are joined by a disulfide. Residues arginine 145, threonine 189, and 207-209 contribute to the pyrroloquinoline quinone site; that span reads HGS. Glutamate 213 serves as a coordination point for Ca(2+). The tract at residues 244 to 281 is disordered; sequence LNGKDSTVTGDVKAPSWPDDRNSPTGKVESWSHGGGAP. Asparagine 300 and aspartate 350 together coordinate Ca(2+). Residue aspartate 350 is the Proton acceptor of the active site. Arginine 378 is a binding site for pyrroloquinoline quinone. The interval 413 to 434 is disordered; sequence GRPVEREGQRPPLPEPGQKHGK. Pyrroloquinoline quinone contacts are provided by tryptophan 523 and alanine 587.

Belongs to the bacterial PQQ dehydrogenase family. In terms of assembly, homodimer. Interacts with cytochrome c550. It depends on pyrroloquinoline quinone as a cofactor. Ca(2+) serves as cofactor. The disulfide ring formed between the two adjacent cysteine residues Cys-139 and Cys-140 is essential for efficient electron transfer at pH 7 from QEDH to its natural electron acceptor cytochrome c550.

The protein localises to the periplasm. It catalyses the reaction a primary alcohol + 2 Fe(III)-[cytochrome c] = an aldehyde + 2 Fe(II)-[cytochrome c] + 2 H(+). The catalysed reaction is ethanol + 2 Fe(III)-[cytochrome c] = acetaldehyde + 2 Fe(II)-[cytochrome c] + 2 H(+). It carries out the reaction butan-1-ol + 2 Fe(III)-[cytochrome c] = butanal + 2 Fe(II)-[cytochrome c] + 2 H(+). The enzyme catalyses propan-2-ol + 2 Fe(III)-[cytochrome c] = acetone + 2 Fe(II)-[cytochrome c] + 2 H(+). It catalyses the reaction 1-propanol + 2 Fe(III)-[cytochrome c] = propanal + 2 Fe(II)-[cytochrome c] + 2 H(+). Its pathway is alcohol metabolism; ethanol degradation; acetate from ethanol: step 1/2. Inhibited by cyclopropanone ethylhemiketal. Activated by ammonia (500mM), methylamine (5mM), ethylamine (5mM), octylamine (5mM), ethanolamine (5mM) and 1-amino-2-propanol (5mM), in assays using artificial electron acceptors. Ammonia is not needed for, nor does it stimulate, the ethanol-oxidizing activity when using the natural electron acceptor cytochrome c550. Functionally, catalyzes the oxidation of ethanol and other primary alcohols to the corresponding aldehydes, except methanol, which is a very poor substrate. Uses a specific inducible cytochrome c550, encoded by the adjacent gene in the locus, as electron acceptor. Is a key enzyme of the carbon and energy metabolism during growth of P.aeruginosa on ethanol as the sole carbon and energy source. Is also able to use secondary alcohols as well as aminoalcohols like ethanolamine and 1-amino-2-propanol, and aldehydes as substrates. This Pseudomonas aeruginosa (strain ATCC 15692 / DSM 22644 / CIP 104116 / JCM 14847 / LMG 12228 / 1C / PRS 101 / PAO1) protein is Quinoprotein ethanol dehydrogenase.